We begin with the raw amino-acid sequence, 812 residues long: MNNGDVNNGTARTGRLATGLAPDRPNPRGAATAVRNGGGRVALADRDASSASAQPGQTADDPAVPSAPPSAPPSALPADPPAVAPAVSVDLPYDDLERLVSGAHHDPHALLGAHPHPGSDATVVRVLRPDARAVTVLVGPARYPATRLHSGGVFGVAVPGMLPDYRIEVTYPDGPYLIDDPYRHLPTLGEMDLHLIIEGRHEQLWKVLGAHPRALTTPGGATVTGVSFAVWAPSARGVRLVGDFDFWDGRAFPMRSLGRSGIWELFVPGAGTGARYKYEILGFDGIWRQKADPLAFHTEVPPATASVVFASDFTWNDGAWLDRRARTAWRTEPVSVYEVHLGSWRRGLSYRELAEELTAYVVENGFTHVEMLPVAEHPFGGSWGYQVSAYYAPTARFGSPDEFRHLVDTLHRAGIGVIVDWVPAHFPRDTWALGRFDGTPLYEHPDPRRGEQPDWGTYVFDLGRPEVRNFLVANALYWFEEFHIDGLRVDAVASMLYLDYSRPEGGWLPNIHGGRENLDAVSFLQETNATVYRRFPGAMMIAEESTAWPGVTRPTHLGGLGFGFKWNMGWMHDTLDYNSRLPIHRMYHHHQMTFSMVYAYSENFILPFSHDEVVHGKGSLLRKMPGDRWAQLANLRALLAYMWAHPGKKLLFMGCEFAQDNEWNESASLEWPLLDDPAHAGVADLVRDLNGLYRTVPALYQHDADPAGFSWIDANDAENNVFSFLRWSGEDPAGGVLACVTNFAGIGHEGYRIGLPFPGRWREILNTDGYRYGGGNIGNLGSVQAVEEPHHGLDASATLTLPPLGAIWLSPA.

Polar residues predominate over residues 1 to 11 (MNNGDVNNGTA). The segment at 1-83 (MNNGDVNNGT…SALPADPPAV (83 aa)) is disordered. Residues 49–64 (SSASAQPGQTADDPAV) are compositionally biased toward low complexity. Over residues 65-83 (PSAPPSAPPSALPADPPAV) the composition is skewed to pro residues. Catalysis depends on D490, which acts as the Nucleophile. The active-site Proton donor is E543.

This sequence belongs to the glycosyl hydrolase 13 family. GlgB subfamily. Monomer.

The catalysed reaction is Transfers a segment of a (1-&gt;4)-alpha-D-glucan chain to a primary hydroxy group in a similar glucan chain.. It participates in glycan biosynthesis; glycogen biosynthesis. In terms of biological role, catalyzes the formation of the alpha-1,6-glucosidic linkages in glycogen by scission of a 1,4-alpha-linked oligosaccharide from growing alpha-1,4-glucan chains and the subsequent attachment of the oligosaccharide to the alpha-1,6 position. The sequence is that of 1,4-alpha-glucan branching enzyme GlgB from Frankia casuarinae (strain DSM 45818 / CECT 9043 / HFP020203 / CcI3).